The following is an 802-amino-acid chain: Chromosome alignment-maintaining phosphoprotein 1 (802 aa).

Position 1 is an N-acetylmethionine (M1). The segment covering 88 to 105 (SDKWSEQPKEQPSKDTES) has biased composition (basic and acidic residues). Residues 88 to 475 (SDKWSEQPKE…PDLWKSSFIM (388 aa)) are disordered. A Phosphoserine modification is found at S108. Residues 135–148 (QKTSPSLCPESQAS) show a composition bias toward polar residues. A compositionally biased stretch (basic and acidic residues) spans 185–203 (ERVDPPCELPELEKPERGP). 15 positions are modified to phosphoserine: S204, S207, S234, S237, S243, S252, S254, S265, S272, S276, S298, S309, S334, S345, and S365. The tract at residues 261 to 479 (ARTASPEPRK…KSSFIMESQK (219 aa)) is mediates interaction with MAD2L2. Over residues 332–351 (PMSPGPWKPIPSVSPGPWKP) the composition is skewed to pro residues. Over residues 354-368 (SMSTASWKSSVSSGS) the composition is skewed to low complexity. Residues 369 to 378 (WKTPPTSPES) show a composition bias toward polar residues. T371 is subject to Phosphothreonine. 9 positions are modified to phosphoserine: S375, S394, S405, S416, S421, S425, S432, S434, and S441. The mediates localization to the spindle and the kinetochore and is required for the attachment of spindle microtubules to the kinetochore stretch occupies residues 440-580 (VSPDQRKTSP…EIQLEAVDNA (141 aa)). Phosphothreonine is present on T447. A phosphoserine mark is found at S448, S451, and S461. At K479 the chain carries N6-acetyllysine; alternate. K479 is covalently cross-linked (Glycyl lysine isopeptide (Lys-Gly) (interchain with G-Cter in SUMO2); alternate). Phosphoserine is present on residues S497, S502, and S532. K555 is covalently cross-linked (Glycyl lysine isopeptide (Lys-Gly) (interchain with G-Cter in SUMO2)). The segment at 581 to 802 (KCDSLAQEGL…LESPLEEQQI (222 aa)) is mediates localization to the chromosome and the spindle and negatively regulates chromosome alignment. Residue T593 is modified to Phosphothreonine. K596 participates in a covalent cross-link: Glycyl lysine isopeptide (Lys-Gly) (interchain with G-Cter in SUMO2). 7 positions are modified to phosphoserine: S603, S605, S617, S622, S641, S642, and S643. Residues 603–625 (SPSSKKLKKDSQENSDAELSSSE) form a disordered region. K660 is covalently cross-linked (Glycyl lysine isopeptide (Lys-Gly) (interchain with G-Cter in SUMO2)). At S665 the chain carries Phosphoserine. Residue K679 forms a Glycyl lysine isopeptide (Lys-Gly) (interchain with G-Cter in SUMO2) linkage. The residue at position 726 (S726) is a Phosphoserine. The C2H2-type zinc-finger motif lies at 728–750 (YKCTICGKAFLLESLLKNHVAAH).

Interacts with MAD2L2. Interacts with POGZ, CBX1, CBX3 and CBX5. Post-translationally, phosphorylated by CDK1. Mitotic phosphorylation is required for the attachment of spindle microtubules to the kinetochore.

It localises to the nucleus. Its subcellular location is the chromosome. The protein localises to the centromere. The protein resides in the kinetochore. It is found in the cytoplasm. It localises to the cytoskeleton. Its subcellular location is the spindle. Its function is as follows. Required for proper alignment of chromosomes at metaphase and their accurate segregation during mitosis. Involved in the maintenance of spindle microtubules attachment to the kinetochore during sister chromatid biorientation. May recruit CENPE and CENPF to the kinetochore. The sequence is that of Chromosome alignment-maintaining phosphoprotein 1 (Champ1) from Mus musculus (Mouse).